The chain runs to 908 residues: Serine/threonine-protein kinase WARTS homolog (908 aa).

A coiled-coil region spans residues 42–70; it reads EIRVGRHRAKLDEIRESLKAYEHEAGLLS. 2 stretches are compositionally biased toward low complexity: residues 115–125 and 168–181; these read VSSAAVSNSNS and PSTT…TTTE. 4 disordered regions span residues 115 to 134, 162 to 183, 203 to 225, and 388 to 412; these read VSSA…GGHK, MIRN…TEES, NNNA…DSSP, and KSRA…VSSP. The segment covering 392–404 has biased composition (pro residues); that stretch reads QPPPPQYNQPSEP. The stretch at 439–470 forms a coiled coil; that stretch reads YMEQHVERLLQQYKEREKRMKQLEKEMVSAQL. In terms of domain architecture, Protein kinase spans 502 to 807; the sequence is FTVISHIGVG…TAQVKNHPWF (306 aa). Residues 508-516 and Lys-531 each bind ATP; that span reads IGVGAFGKV. Asp-625 (proton acceptor) is an active-site residue. Residues 808 to 874 enclose the AGC-kinase C-terminal domain; the sequence is RGIDWVNLRK…RHFFDTDSVG (67 aa).

It belongs to the protein kinase superfamily. AGC Ser/Thr protein kinase family. In terms of assembly, interacts (via N-terminus) with yap-1 (via WW domain). Mg(2+) serves as cofactor. Expressed in muscles and epithelial tissues including pharynx, intestine and hypodermis. Expressed in vulval and spermathecal seam cells.

The protein resides in the cytoplasm. The protein localises to the apical cell membrane. It carries out the reaction L-seryl-[protein] + ATP = O-phospho-L-seryl-[protein] + ADP + H(+). It catalyses the reaction L-threonyl-[protein] + ATP = O-phospho-L-threonyl-[protein] + ADP + H(+). Phosphorylates yap-1 which may negatively regulate yap-1 nuclear localization. Plays an essential role in larval development. Regulates growth, the formation of gut granules, lifespan and cell and body sizes probably in synergy with the TGF-beta sma/mab pathway. Does not appear to regulate apoptosis and proliferation. In addition, may synergize with the TGF-beta daf-7 dauer pathway to regulate entry into the dauer stage. Maintains the cellular integrity of intestinal cells by regulating the localization of apical actin and junctional proteins. This Caenorhabditis elegans protein is Serine/threonine-protein kinase WARTS homolog.